The chain runs to 96 residues: UPF0235 protein ESA_00387 (96 aa).

This sequence belongs to the UPF0235 family.

The sequence is that of UPF0235 protein ESA_00387 from Cronobacter sakazakii (strain ATCC BAA-894) (Enterobacter sakazakii).